A 445-amino-acid polypeptide reads, in one-letter code: Chromosomal replication initiator protein DnaA (445 aa).

The tract at residues 1 to 71 (MEEVWLQAQS…SVQSLTDSQT (71 aa)) is domain I, interacts with DnaA modulators. Residues 71–108 (TKIELLIAKPKTEKPKQPAASEVTAAEPEACSGPDHST) are domain II. The segment at 83–106 (EKPKQPAASEVTAAEPEACSGPDH) is disordered. Residues 109–325 (NLNPKYTFDT…GMLIRLGAVS (217 aa)) form a domain III, AAA+ region region. ATP is bound by residues Gly153, Gly155, Lys156, and Thr157. A domain IV, binds dsDNA region spans residues 326–445 (SLTGKNITLD…VDTLRKGLLS (120 aa)).

The protein belongs to the DnaA family. In terms of assembly, oligomerizes as a right-handed, spiral filament on DNA at oriC.

Its subcellular location is the cytoplasm. Functionally, plays an essential role in the initiation and regulation of chromosomal replication. ATP-DnaA binds to the origin of replication (oriC) to initiate formation of the DNA replication initiation complex once per cell cycle. Binds the DnaA box (a 9 base pair repeat at the origin) and separates the double-stranded (ds)DNA. Forms a right-handed helical filament on oriC DNA; dsDNA binds to the exterior of the filament while single-stranded (ss)DNA is stabiized in the filament's interior. The ATP-DnaA-oriC complex binds and stabilizes one strand of the AT-rich DNA unwinding element (DUE), permitting loading of DNA polymerase. After initiation quickly degrades to an ADP-DnaA complex that is not apt for DNA replication. Binds acidic phospholipids. This is Chromosomal replication initiator protein DnaA from Geobacter sulfurreducens (strain ATCC 51573 / DSM 12127 / PCA).